The primary structure comprises 276 residues: Biotin synthase (276 aa).

The Radical SAM core domain occupies 1-226; it reads MKKIYLCAIS…EAIIMLAGGR (226 aa). The [4Fe-4S] cluster site is built by Cys17, Cys21, and Cys24. [2Fe-2S] cluster is bound by residues Cys61, Cys95, and Cys153.

This sequence belongs to the radical SAM superfamily. Biotin synthase family. In terms of assembly, homodimer. It depends on [4Fe-4S] cluster as a cofactor. The cofactor is [2Fe-2S] cluster.

The enzyme catalyses (4R,5S)-dethiobiotin + (sulfur carrier)-SH + 2 reduced [2Fe-2S]-[ferredoxin] + 2 S-adenosyl-L-methionine = (sulfur carrier)-H + biotin + 2 5'-deoxyadenosine + 2 L-methionine + 2 oxidized [2Fe-2S]-[ferredoxin]. Its pathway is cofactor biosynthesis; biotin biosynthesis; biotin from 7,8-diaminononanoate: step 2/2. Catalyzes the conversion of dethiobiotin (DTB) to biotin by the insertion of a sulfur atom into dethiobiotin via a radical-based mechanism. This chain is Biotin synthase, found in Nautilia profundicola (strain ATCC BAA-1463 / DSM 18972 / AmH).